A 317-amino-acid polypeptide reads, in one-letter code: 4-hydroxy-3-methylbut-2-enyl diphosphate reductase (317 aa).

Cysteine 12 provides a ligand contact to [4Fe-4S] cluster. (2E)-4-hydroxy-3-methylbut-2-enyl diphosphate is bound by residues histidine 43 and histidine 81. Positions 43 and 81 each coordinate dimethylallyl diphosphate. Residues histidine 43 and histidine 81 each coordinate isopentenyl diphosphate. Cysteine 103 is a [4Fe-4S] cluster binding site. Histidine 131 provides a ligand contact to (2E)-4-hydroxy-3-methylbut-2-enyl diphosphate. Histidine 131 contacts dimethylallyl diphosphate. Histidine 131 is a binding site for isopentenyl diphosphate. The active-site Proton donor is glutamate 133. Threonine 172 serves as a coordination point for (2E)-4-hydroxy-3-methylbut-2-enyl diphosphate. Residue cysteine 200 participates in [4Fe-4S] cluster binding. Residues serine 228, asparagine 230, and serine 273 each coordinate (2E)-4-hydroxy-3-methylbut-2-enyl diphosphate. The dimethylallyl diphosphate site is built by serine 228, asparagine 230, and serine 273. 3 residues coordinate isopentenyl diphosphate: serine 228, asparagine 230, and serine 273.

Belongs to the IspH family. It depends on [4Fe-4S] cluster as a cofactor.

It carries out the reaction isopentenyl diphosphate + 2 oxidized [2Fe-2S]-[ferredoxin] + H2O = (2E)-4-hydroxy-3-methylbut-2-enyl diphosphate + 2 reduced [2Fe-2S]-[ferredoxin] + 2 H(+). The catalysed reaction is dimethylallyl diphosphate + 2 oxidized [2Fe-2S]-[ferredoxin] + H2O = (2E)-4-hydroxy-3-methylbut-2-enyl diphosphate + 2 reduced [2Fe-2S]-[ferredoxin] + 2 H(+). The protein operates within isoprenoid biosynthesis; dimethylallyl diphosphate biosynthesis; dimethylallyl diphosphate from (2E)-4-hydroxy-3-methylbutenyl diphosphate: step 1/1. It participates in isoprenoid biosynthesis; isopentenyl diphosphate biosynthesis via DXP pathway; isopentenyl diphosphate from 1-deoxy-D-xylulose 5-phosphate: step 6/6. Functionally, catalyzes the conversion of 1-hydroxy-2-methyl-2-(E)-butenyl 4-diphosphate (HMBPP) into a mixture of isopentenyl diphosphate (IPP) and dimethylallyl diphosphate (DMAPP). Acts in the terminal step of the DOXP/MEP pathway for isoprenoid precursor biosynthesis. The chain is 4-hydroxy-3-methylbut-2-enyl diphosphate reductase from Exiguobacterium sp. (strain ATCC BAA-1283 / AT1b).